Consider the following 65-residue polypeptide: Photosystem II reaction center protein J (65 aa).

A helical transmembrane segment spans residues L35–Y55.

The protein belongs to the PsbJ family. As to quaternary structure, PSII is composed of 1 copy each of membrane proteins PsbA, PsbB, PsbC, PsbD, PsbE, PsbF, PsbH, PsbI, PsbJ, PsbK, PsbL, PsbM, PsbT, PsbX, PsbY, Psb30/Ycf12, peripheral proteins PsbO, CyanoQ (PsbQ), PsbU, PsbV and a large number of cofactors. It forms dimeric complexes.

The protein resides in the cellular thylakoid membrane. One of the components of the core complex of photosystem II (PSII). PSII is a light-driven water:plastoquinone oxidoreductase that uses light energy to abstract electrons from H(2)O, generating O(2) and a proton gradient subsequently used for ATP formation. It consists of a core antenna complex that captures photons, and an electron transfer chain that converts photonic excitation into a charge separation. The protein is Photosystem II reaction center protein J of Prochlorococcus marinus (strain NATL2A).